The chain runs to 245 residues: Small ribosomal subunit protein uS3 (245 aa).

Residues 39 to 108 (IRNYIKKNYY…SVFVNVQEVK (70 aa)) enclose the KH type-2 domain.

It belongs to the universal ribosomal protein uS3 family. In terms of assembly, part of the 30S ribosomal subunit. Forms a tight complex with proteins S10 and S14.

Functionally, binds the lower part of the 30S subunit head. Binds mRNA in the 70S ribosome, positioning it for translation. This is Small ribosomal subunit protein uS3 from Dictyoglomus turgidum (strain DSM 6724 / Z-1310).